A 776-amino-acid polypeptide reads, in one-letter code: Palmitoyltransferase AKR1 (776 aa).

Over 1–311 (MDQEMTTVAS…MEGKLGPRNT (311 aa)) the chain is Cytoplasmic. The segment at 38–58 (RLDEGSSIRGGELERDSQEVG) is disordered. 6 ANK repeats span residues 68-97 (CHDL…SLNL), 103-132 (QDVT…DIDA), 137-166 (LKAT…DPNI), 170-199 (QGFN…AIDE), 203-232 (DGHT…SVNS), and 236-265 (AGMT…SLDA). The helical transmembrane segment at 312–332 (ILAIFLLPIAVLWLIFSTFKW) threads the bilayer. Over 333–336 (LPVY) the chain is Lumenal. The chain crosses the membrane as a helical span at residues 337–357 (VGVPFAIAEFMGMQYTVVLVL). Residues 358 to 368 (LGHIKAQDKVS) lie on the Cytoplasmic side of the membrane. A helical transmembrane segment spans residues 369 to 389 (TSNYFASIITASLIWVGYCWI). Topologically, residues 390–402 (SRFAVNTPGYAFS) are lumenal. The helical transmembrane segment at 403 to 423 (NLGFIIMFVGCCWTFWTAIVT) threads the bilayer. Over 424 to 498 (DPGFVPKGQQ…NCVGAKNHRS (75 aa)) the chain is Cytoplasmic. A DHHC domain is found at 454-504 (NFCIVCMARKPLRSKHCRTCNRCVARFDHHCPWIWNCVGAKNHRSFLLFVL). Cysteine 484 (S-palmitoyl cysteine intermediate) is an active-site residue. The helical transmembrane segment at 499–519 (FLLFVLFLIGGIILFIRLTIA) threads the bilayer. Topologically, residues 520–553 (YIQQNAPEYIPTPNPGLTTCDISTTLCQAGDFDP) are lumenal. Residues 554–574 (FLLCMALWSTLQLTWTSVLAI) traverse the membrane as a helical segment. Over 575–776 (SHLWQVSRQM…RYEVVSEQEV (202 aa)) the chain is Cytoplasmic. Residues 628 to 665 (GAGEEAAGPPGAEAGPEGNALLPPPGGHVHGPQCRHGD) form a disordered region. Positions 629–645 (AGEEAAGPPGAEAGPEG) are enriched in low complexity.

This sequence belongs to the DHHC palmitoyltransferase family. AKR/ZDHHC17 subfamily.

It localises to the early endosome membrane. Its subcellular location is the golgi apparatus membrane. It catalyses the reaction L-cysteinyl-[protein] + hexadecanoyl-CoA = S-hexadecanoyl-L-cysteinyl-[protein] + CoA. Its function is as follows. Palmitoyltransferase specific for casein kinase 1. The polypeptide is Palmitoyltransferase AKR1 (AKR1) (Cryptococcus neoformans var. neoformans serotype D (strain B-3501A) (Filobasidiella neoformans)).